The chain runs to 429 residues: Adenylosuccinate synthetase (429 aa).

GTP contacts are provided by residues 13–19 (GDEGKGK) and 41–43 (GHT). Asp-14 functions as the Proton acceptor in the catalytic mechanism. Residues Asp-14 and Gly-41 each coordinate Mg(2+). IMP-binding positions include 14–17 (DEGK), 39–42 (NAGH), Thr-130, Arg-144, Gln-225, Thr-240, and Arg-304. The Proton donor role is filled by His-42. 300–306 (ATTGRAR) is a binding site for substrate. GTP is bound by residues Arg-306, 332 to 334 (KLD), and 413 to 415 (STG).

The protein belongs to the adenylosuccinate synthetase family. As to quaternary structure, homodimer. Mg(2+) serves as cofactor.

It is found in the cytoplasm. It catalyses the reaction IMP + L-aspartate + GTP = N(6)-(1,2-dicarboxyethyl)-AMP + GDP + phosphate + 2 H(+). Its pathway is purine metabolism; AMP biosynthesis via de novo pathway; AMP from IMP: step 1/2. Functionally, plays an important role in the de novo pathway of purine nucleotide biosynthesis. Catalyzes the first committed step in the biosynthesis of AMP from IMP. This Pseudomonas fluorescens (strain Pf0-1) protein is Adenylosuccinate synthetase.